A 444-amino-acid polypeptide reads, in one-letter code: Argininosuccinate synthase (444 aa).

ATP is bound by residues 18–26 (AFSGGLDTS) and alanine 44. Tyrosine 100 provides a ligand contact to L-citrulline. 2 residues coordinate ATP: glycine 130 and threonine 132. The L-aspartate site is built by threonine 132, asparagine 136, and aspartate 137. Position 136 (asparagine 136) interacts with L-citrulline. Aspartate 137 is a binding site for ATP. Residues arginine 140 and serine 193 each contribute to the L-citrulline site. Aspartate 195 is a binding site for ATP. 3 residues coordinate L-citrulline: threonine 202, glutamate 204, and glutamate 281.

This sequence belongs to the argininosuccinate synthase family. Type 2 subfamily. Homotetramer.

The protein resides in the cytoplasm. It catalyses the reaction L-citrulline + L-aspartate + ATP = 2-(N(omega)-L-arginino)succinate + AMP + diphosphate + H(+). The protein operates within amino-acid biosynthesis; L-arginine biosynthesis; L-arginine from L-ornithine and carbamoyl phosphate: step 2/3. This Actinobacillus succinogenes (strain ATCC 55618 / DSM 22257 / CCUG 43843 / 130Z) protein is Argininosuccinate synthase.